The chain runs to 36 residues: Kappa-isophellitoxin-Tst1a (36 aa).

Positions 2 to 36 (CENNFSDRECERRKKDCDSSMKFRELSCPKTCGTC) constitute a ShKT domain. 3 cysteine pairs are disulfide-bonded: Cys-2-Cys-36, Cys-11-Cys-29, and Cys-18-Cys-33.

This sequence belongs to the sea anemone type 1 potassium channel toxin family. Type 1a subfamily. As to expression, predominantly expressed in mesenterial filaments (at protein level), a morphological structure that has a functional role in prey killing and digestion. Also expressed in club-tips, tentacles, actinopharynx, body column, mesenterial filaments and pedal disk.

It localises to the secreted. It is found in the nematocyst. Its function is as follows. Probable toxin with unknown function. Does not inhibit all channels tested. Is not cytotoxic on macrophage. The chain is Kappa-isophellitoxin-Tst1a from Telmatactis stephensoni (Sea anemone).